The primary structure comprises 654 residues: Periplasmic beta-glucosidase/beta-xylosidase (654 aa).

A signal peptide spans 1 to 25 (MEKSATRQKALLIALPLLFSPLASA). Catalysis depends on residues Asp235 and Asp360.

Belongs to the glycosyl hydrolase 3 family.

The protein resides in the periplasm. The enzyme catalyses Hydrolysis of terminal, non-reducing beta-D-glucosyl residues with release of beta-D-glucose.. The catalysed reaction is Hydrolysis of (1-&gt;4)-beta-D-xylans, to remove successive D-xylose residues from the non-reducing termini.. Exhibits both beta-glucosidase and beta-xylosidase activities. This is Periplasmic beta-glucosidase/beta-xylosidase (bgxA) from Dickeya chrysanthemi (Pectobacterium chrysanthemi).